The primary structure comprises 296 residues: Chondrolectin (296 aa).

Positions 1 to 20 are cleaved as a signal peptide; sequence MRATLRILCALTFLVSCSRG. Over 21-238 the chain is Extracellular; the sequence is ARVVSGQTVC…RLIIAGPSSM (218 aa). The region spanning 38–187 is the C-type lectin domain; the sequence is CYKIAYFKDV…CNMKHNFICK (150 aa). Residues 197 to 221 show a composition bias toward basic and acidic residues; sequence VQSDRPGGHDVDLSTEDKEDRRTPP. Positions 197 to 229 are disordered; it reads VQSDRPGGHDVDLSTEDKEDRRTPPTDEDESPR. A helical membrane pass occupies residues 239 to 266; sequence LLIYVIIPTIPLLLLILVASGTCCFQML. Topologically, residues 267–296 are cytoplasmic; sequence SKSKPRTKTSVNQSTLWISKTPKIDSGMEV.

In terms of tissue distribution, expressed in developing motor neurons.

It is found in the membrane. Its function is as follows. Plays a role in the development of the nervous system such as in neurite outgrowth and elongation. Involved in motor axon growth and guidance. Required for correct interactions of motor axons with the horizontal myoseptum. This is Chondrolectin (chodl) from Danio rerio (Zebrafish).